Here is an 85-residue protein sequence, read N- to C-terminus: Toxin BmKaTX15 (85 aa).

An N-terminal signal peptide occupies residues 1–19 (MNYLVFFSLALLVMTGVES). The 63-residue stretch at 21–83 (RDGYIADDKN…VPIRVPGKCN (63 aa)) folds into the LCN-type CS-alpha/beta domain. 4 disulfide bridges follow: C31/C82, C35/C55, C41/C65, and C45/C67.

Belongs to the long (4 C-C) scorpion toxin superfamily. Sodium channel inhibitor family. Alpha subfamily. As to expression, expressed by the venom gland.

The protein localises to the secreted. Its function is as follows. Alpha toxins bind voltage-independently at site-3 of sodium channels (Nav) and inhibit the inactivation of the activated channels, thereby blocking neuronal transmission. This chain is Toxin BmKaTX15, found in Olivierus martensii (Manchurian scorpion).